The primary structure comprises 286 residues: Flagellar filament 33 kDa core protein (286 aa).

The protein belongs to the bacterial flagellin family. The flagellum consists of an outer layer composed of repeating units of FlaA around a core that contains several antigenically related polypeptides.

It is found in the periplasmic flagellum. Its subcellular location is the periplasm. Functionally, component of the core of the flagella. In Treponema phagedenis, this protein is Flagellar filament 33 kDa core protein.